A 118-amino-acid polypeptide reads, in one-letter code: Small ribosomal subunit protein uS13 (118 aa).

A disordered region spans residues 94-118 (SLPLRGQRTKTNARTRKGPRKPIKR).

The protein belongs to the universal ribosomal protein uS13 family. In terms of assembly, part of the 30S ribosomal subunit. Forms a loose heterodimer with protein S19. Forms two bridges to the 50S subunit in the 70S ribosome.

Its function is as follows. Located at the top of the head of the 30S subunit, it contacts several helices of the 16S rRNA. In the 70S ribosome it contacts the 23S rRNA (bridge B1a) and protein L5 of the 50S subunit (bridge B1b), connecting the 2 subunits; these bridges are implicated in subunit movement. Contacts the tRNAs in the A and P-sites. This chain is Small ribosomal subunit protein uS13, found in Photobacterium profundum (strain SS9).